Reading from the N-terminus, the 67-residue chain is Cell division protein ZapB (67 aa).

Positions 3 to 59 (LELLSQLETKIQTALETIELLKLELDEEKEKAANLAEQNHQLKQELSSWNDKITGLV) form a coiled coil.

This sequence belongs to the ZapB family. In terms of assembly, homodimer. The ends of the coiled-coil dimer bind to each other, forming polymers. Interacts with FtsZ.

The protein localises to the cytoplasm. Non-essential, abundant cell division factor that is required for proper Z-ring formation. It is recruited early to the divisome by direct interaction with FtsZ, stimulating Z-ring assembly and thereby promoting cell division earlier in the cell cycle. Its recruitment to the Z-ring requires functional FtsA or ZipA. This is Cell division protein ZapB from Shewanella amazonensis (strain ATCC BAA-1098 / SB2B).